A 282-amino-acid polypeptide reads, in one-letter code: V-set domain-containing T-cell activation inhibitor 1 (282 aa).

Positions 1-24 (MASLGQIIFWSIINVIIILAGAIV) are cleaved as a signal peptide. 2 consecutive Ig-like V-type domains span residues 35-144 (HFIT…ANLE) and 153-241 (PEIN…IKVT). Cystine bridges form between cysteine 56–cysteine 130 and cysteine 168–cysteine 225. N-linked (GlcNAc...) asparagine glycosylation occurs at asparagine 216. Glycine 257 carries GPI-anchor amidated glycine lipidation. Residues 258 to 282 (PSPCVSSVSAAGWALLSLSCCLMLR) constitute a propeptide, removed in mature form.

The protein belongs to the immunoglobulin superfamily. BTN/MOG family. N-glycosylated.

It is found in the cell membrane. In terms of biological role, negatively regulates T-cell-mediated immune response by inhibiting T-cell activation, proliferation, cytokine production and development of cytotoxicity. When expressed on the cell surface of tumor macrophages, plays an important role, together with regulatory T-cells (Treg), in the suppression of tumor-associated antigen-specific T-cell immunity. Involved in promoting epithelial cell transformation. In Rattus norvegicus (Rat), this protein is V-set domain-containing T-cell activation inhibitor 1.